Reading from the N-terminus, the 435-residue chain is Cytochrome c oxidase subunit 3 (435 aa).

7 helical membrane-spanning segments follow: residues 70-90 (VAPL…FGVI), 96-116 (LLIA…SIIF), 132-152 (LVMG…SFFW), 176-196 (VYSY…SGAI), 325-345 (LYFT…EYFF), 360-380 (FLLT…IGII), and 412-432 (LFYW…IYWW).

It belongs to the cytochrome c oxidase subunit 3 family. In terms of assembly, component of the cytochrome c oxidase (complex IV, CIV), a multisubunit enzyme composed of a catalytic core of 3 subunits and several supernumerary subunits. The complex exists as a monomer or a dimer and forms supercomplexes (SCs) in the inner mitochondrial membrane with ubiquinol-cytochrome c oxidoreductase (cytochrome b-c1 complex, complex III, CIII).

The protein resides in the mitochondrion inner membrane. It catalyses the reaction 4 Fe(II)-[cytochrome c] + O2 + 8 H(+)(in) = 4 Fe(III)-[cytochrome c] + 2 H2O + 4 H(+)(out). Functionally, component of the cytochrome c oxidase, the last enzyme in the mitochondrial electron transport chain which drives oxidative phosphorylation. The respiratory chain contains 3 multisubunit complexes succinate dehydrogenase (complex II, CII), ubiquinol-cytochrome c oxidoreductase (cytochrome b-c1 complex, complex III, CIII) and cytochrome c oxidase (complex IV, CIV), that cooperate to transfer electrons derived from NADH and succinate to molecular oxygen, creating an electrochemical gradient over the inner membrane that drives transmembrane transport and the ATP synthase. Cytochrome c oxidase is the component of the respiratory chain that catalyzes the reduction of oxygen to water. Electrons originating from reduced cytochrome c in the intermembrane space (IMS) are transferred via the dinuclear copper A center (CU(A)) of subunit 2 and heme A of subunit 1 to the active site in subunit 1, a binuclear center (BNC) formed by heme A3 and copper B (CU(B)). The BNC reduces molecular oxygen to 2 water molecules using 4 electrons from cytochrome c in the IMS and 4 protons from the mitochondrial matrix. The protein is Cytochrome c oxidase subunit 3 (cox3) of Dictyostelium discoideum (Social amoeba).